The primary structure comprises 488 residues: Glutamyl-tRNA(Gln) amidotransferase subunit A (488 aa).

Residues Lys-77 and Ser-152 each act as charge relay system in the active site. Ser-176 serves as the catalytic Acyl-ester intermediate.

The protein belongs to the amidase family. GatA subfamily. As to quaternary structure, heterotrimer of A, B and C subunits.

The catalysed reaction is L-glutamyl-tRNA(Gln) + L-glutamine + ATP + H2O = L-glutaminyl-tRNA(Gln) + L-glutamate + ADP + phosphate + H(+). Its function is as follows. Allows the formation of correctly charged Gln-tRNA(Gln) through the transamidation of misacylated Glu-tRNA(Gln) in organisms which lack glutaminyl-tRNA synthetase. The reaction takes place in the presence of glutamine and ATP through an activated gamma-phospho-Glu-tRNA(Gln). This Streptococcus pyogenes serotype M3 (strain ATCC BAA-595 / MGAS315) protein is Glutamyl-tRNA(Gln) amidotransferase subunit A.